We begin with the raw amino-acid sequence, 76 residues long: Omega-conotoxin-like TxO1 (76 aa).

An N-terminal signal peptide occupies residues 1–22 (MKLTCVVIVAVLFLTVWTFATA). Positions 23-50 (DDSGNGLEKLFSNAHHEMKNPEASKLNE) are excised as a propeptide. Disulfide bonds link C52/C67, C59/C70, and C66/C75.

It belongs to the conotoxin O1 superfamily. In terms of tissue distribution, expressed by the venom duct.

It is found in the secreted. Functionally, omega-conotoxins act at presynaptic membranes, they bind and block voltage-gated calcium channels (Cav). This Conus textile (Cloth-of-gold cone) protein is Omega-conotoxin-like TxO1.